The chain runs to 230 residues: Poxin (230 aa).

Residue histidine 43 is the Proton donor of the active site. Tyrosine 174 functions as the Shared with catalytic histidine of dimeric partner in the catalytic mechanism. The active-site Proton acceptor; shared with catalytic histidine of dimeric partner is the lysine 178.

Belongs to the poxin family. As to quaternary structure, homodimer.

It catalyses the reaction 2',3'-cGAMP + H2O = Gp(2'-5')Ap(3') + H(+). Functionally, nuclease that cleaves host 2',3'-cGAMP. This is Poxin (P26) from Orgyia pseudotsugata multicapsid polyhedrosis virus (OpMNPV).